Here is a 337-residue protein sequence, read N- to C-terminus: 4-hydroxythreonine-4-phosphate dehydrogenase (337 aa).

Substrate is bound by residues H137 and T138. A divalent metal cation is bound by residues H167, H212, and H267. Substrate contacts are provided by K275, N284, and R293.

Belongs to the PdxA family. As to quaternary structure, homodimer. Zn(2+) serves as cofactor. The cofactor is Mg(2+). Requires Co(2+) as cofactor.

The protein localises to the cytoplasm. It carries out the reaction 4-(phosphooxy)-L-threonine + NAD(+) = 3-amino-2-oxopropyl phosphate + CO2 + NADH. It participates in cofactor biosynthesis; pyridoxine 5'-phosphate biosynthesis; pyridoxine 5'-phosphate from D-erythrose 4-phosphate: step 4/5. Catalyzes the NAD(P)-dependent oxidation of 4-(phosphooxy)-L-threonine (HTP) into 2-amino-3-oxo-4-(phosphooxy)butyric acid which spontaneously decarboxylates to form 3-amino-2-oxopropyl phosphate (AHAP). The polypeptide is 4-hydroxythreonine-4-phosphate dehydrogenase (Ectopseudomonas mendocina (strain ymp) (Pseudomonas mendocina)).